The chain runs to 367 residues: Septin-1 (367 aa).

In terms of domain architecture, Septin-type G spans 22–296 (KGFDFTLMVA…EGYRARCLQS (275 aa)). The segment at 32–39 (GESGLGKS) is G1 motif. Residues 32–39 (GESGLGKS), threonine 66, glycine 92, and 171–179 (KADALMPKE) contribute to the GTP site. The G3 motif stretch occupies residues 89-92 (DTPG). Positions 170–173 (GKAD) are G4 motif. Position 206 is a phosphoserine (serine 206). GTP is bound by residues glycine 229 and arginine 245. Residue serine 248 is modified to Phosphoserine; by AURKB. Threonine 251 carries the phosphothreonine modification. A phosphoserine; by AURKB mark is found at serine 307 and serine 315.

Belongs to the TRAFAC class TrmE-Era-EngA-EngB-Septin-like GTPase superfamily. Septin GTPase family. Septins polymerize into heterooligomeric protein complexes that form filaments, and can associate with cellular membranes, actin filaments and microtubules. GTPase activity is required for filament formation. Interacts with AURKB.

The protein localises to the cytoplasm. It localises to the cytoskeleton. The protein resides in the microtubule organizing center. It is found in the centrosome. Its subcellular location is the midbody. Its function is as follows. Filament-forming cytoskeletal GTPase. May play a role in cytokinesis (Potential). The chain is Septin-1 from Bos taurus (Bovine).